We begin with the raw amino-acid sequence, 274 residues long: 2,3,4,5-tetrahydropyridine-2,6-dicarboxylate N-succinyltransferase (274 aa).

Substrate contacts are provided by R104 and D141.

Belongs to the transferase hexapeptide repeat family. Homotrimer.

It localises to the cytoplasm. The catalysed reaction is (S)-2,3,4,5-tetrahydrodipicolinate + succinyl-CoA + H2O = (S)-2-succinylamino-6-oxoheptanedioate + CoA. The protein operates within amino-acid biosynthesis; L-lysine biosynthesis via DAP pathway; LL-2,6-diaminopimelate from (S)-tetrahydrodipicolinate (succinylase route): step 1/3. The protein is 2,3,4,5-tetrahydropyridine-2,6-dicarboxylate N-succinyltransferase of Citrobacter koseri (strain ATCC BAA-895 / CDC 4225-83 / SGSC4696).